The sequence spans 161 residues: Regulator of ribonuclease activity A (161 aa).

It belongs to the RraA family. As to quaternary structure, homotrimer. Binds to both RNA-binding sites in the C-terminal region of Rne and to RhlB.

The protein localises to the cytoplasm. Globally modulates RNA abundance by binding to RNase E (Rne) and regulating its endonucleolytic activity. Can modulate Rne action in a substrate-dependent manner by altering the composition of the degradosome. Modulates RNA-binding and helicase activities of the degradosome. This is Regulator of ribonuclease activity A from Salmonella agona (strain SL483).